Here is a 72-residue protein sequence, read N- to C-terminus: SRY-related protein ADW2 (72 aa).

The HMG box DNA-binding region spans 1 to 69; that stretch reads VKRPMNAFMV…KHMADYADYK (69 aa).

It localises to the nucleus. This is SRY-related protein ADW2 from Alligator mississippiensis (American alligator).